Consider the following 248-residue polypeptide: Putative mutator protein MutT4 (248 aa).

The tract at residues 1–64 is disordered; sequence MSDGEQAKSR…GSTRMRTVHE (64 aa). A compositionally biased stretch (basic residues) spans 9–20; it reads SRRRRGRRRGRR. Low complexity predominate over residues 31–44; it reads AQPAGDATPTPATA. Basic residues predominate over residues 45 to 57; sequence KRSRSRSPRRGST. The region spanning 62–198 is the Nudix hydrolase domain; it reads VHETSAGGLV…DERRLAEVAD (137 aa). 4 residues coordinate Mg(2+): G103, E118, E121, and E122. The short motif at 103–124 is the Nudix box element; it reads GHIELGETAEQTAIREVAEETG. The disordered stretch occupies residues 204-248; the sequence is LQSDGPAALPPLPPSSPRRRPQTHSRARHADDSAPGQHNGPGPGP. Positions 220–230 are enriched in basic residues; it reads PRRRPQTHSRA.

This sequence belongs to the Nudix hydrolase family. It depends on Mg(2+) as a cofactor. Mn(2+) is required as a cofactor.

Its function is as follows. May be involved in the GO system responsible for removing an oxidatively damaged form of guanine (7,8-dihydro-8-oxoguanine, 8-oxo-dGTP) from DNA and the nucleotide pool. This is Putative mutator protein MutT4 (mutT4) from Mycobacterium tuberculosis (strain CDC 1551 / Oshkosh).